Consider the following 309-residue polypeptide: Tagatose-6-phosphate kinase (309 aa).

This sequence belongs to the carbohydrate kinase PfkB family. LacC subfamily.

It catalyses the reaction D-tagatofuranose 6-phosphate + ATP = D-tagatofuranose 1,6-bisphosphate + ADP + H(+). It participates in carbohydrate metabolism; D-tagatose 6-phosphate degradation; D-glyceraldehyde 3-phosphate and glycerone phosphate from D-tagatose 6-phosphate: step 1/2. The polypeptide is Tagatose-6-phosphate kinase (Streptococcus pneumoniae serotype 4 (strain ATCC BAA-334 / TIGR4)).